Reading from the N-terminus, the 1092-residue chain is DNA polymerase II large subunit (1092 aa).

The protein belongs to the archaeal DNA polymerase II family. In terms of assembly, heterodimer of a large subunit and a small subunit.

The catalysed reaction is DNA(n) + a 2'-deoxyribonucleoside 5'-triphosphate = DNA(n+1) + diphosphate. It carries out the reaction Exonucleolytic cleavage in the 3'- to 5'-direction to yield nucleoside 5'-phosphates.. In terms of biological role, possesses two activities: a DNA synthesis (polymerase) and an exonucleolytic activity that degrades single-stranded DNA in the 3'- to 5'-direction. Has a template-primer preference which is characteristic of a replicative DNA polymerase. This chain is DNA polymerase II large subunit (polC), found in Methanothermobacter thermautotrophicus (strain ATCC 29096 / DSM 1053 / JCM 10044 / NBRC 100330 / Delta H) (Methanobacterium thermoautotrophicum).